The sequence spans 1038 residues: Ras GTPase-activating protein 1 (1038 aa).

Met1 is modified (N-acetylmethionine). The span at 1 to 16 (MMAAEAGSEEGGPATA) shows a compositional bias: low complexity. Disordered regions lie at residues 1–24 (MMAAEAGSEEGGPATAGTGGAAAT) and 117–152 (ETLGPGGGFPPLPPPPLLPPLGSGLGTVDEGDSLDG). The span at 124 to 135 (GFPPLPPPPLLP) shows a compositional bias: pro residues. The 92-residue stretch at 172 to 263 (WYHGKLDRTI…LKGEKLLYPV (92 aa)) folds into the SH2 1 domain. Residues 270-332 (EDRRRVRAIL…VEDLVEEVGR (63 aa)) form the SH3 domain. Residues 342–432 (WFHGKISKQE…VEGYYLKEPV (91 aa)) form the SH2 2 domain. The PH domain occupies 465–568 (NIVKKGYLLK…WMKGLQAFCS (104 aa)). The C2 domain occupies 568-681 (SLRKSSPGTS…QKGHATDEWF (114 aa)). Tyr606 carries the post-translational modification Phosphotyrosine. Residues 755–965 (KLESLLLCTL…HRMIMFLDEL (211 aa)) enclose the Ras-GAP domain. Ser822 is subject to Phosphoserine.

Interacts with SQSTM1. Interacts with SPSB1; the interaction does not promote degradation. Interacts with CAV2 (tyrosine phosphorylated form). Directly interacts with NCK1. Interacts with PDGFRB (tyrosine phosphorylated). Interacts (via SH2 domain) with the 'Tyr-9' phosphorylated form of PDPK1. Interacts with tyrosine-phosphorylated EPHB4. Phosphorylated by SRC and LCK. The phosphorylation SRC inhibits its ability to stimulate the Ras-GTPase activity, whereas phosphorylation by LCK does not display any effect on stimulation activity.

It is found in the cytoplasm. In terms of biological role, inhibitory regulator of the Ras-cyclic AMP pathway. Stimulates the GTPase of normal but not oncogenic Ras p21. In Rattus norvegicus (Rat), this protein is Ras GTPase-activating protein 1 (Rasa1).